The chain runs to 496 residues: uncharacterized protein (496 aa).

Residues D36, D81, E300, E302, D321, D323, and D375 each coordinate Mg(2+).

Belongs to the XPG/RAD2 endonuclease family. FEN1 subfamily. Requires Mg(2+) as cofactor.

This is an uncharacterized protein from Schizosaccharomyces pombe (strain 972 / ATCC 24843) (Fission yeast).